A 463-amino-acid chain; its full sequence is Elongation factor 1-alpha 1 (463 aa).

The region spanning 5–242 (KIHINIVVIG…DAILPPARPT (238 aa)) is the tr-type G domain. Positions 14-21 (GHVDSGKS) are G1. 14–21 (GHVDSGKS) serves as a coordination point for GTP. The interval 70-74 (GITID) is G2. Residues 91–94 (DAPG) are G3. GTP contacts are provided by residues 91-95 (DAPGH) and 153-156 (NKMD). Positions 153-156 (NKMD) are G4. The segment at 194–196 (SGW) is G5. A 5-glutamyl glycerylphosphorylethanolamine mark is found at glutamate 301 and glutamate 374.

This sequence belongs to the TRAFAC class translation factor GTPase superfamily. Classic translation factor GTPase family. EF-Tu/EF-1A subfamily.

The protein resides in the cytoplasm. Its function is as follows. This protein promotes the GTP-dependent binding of aminoacyl-tRNA to the A-site of ribosomes during protein biosynthesis. This Drosophila melanogaster (Fruit fly) protein is Elongation factor 1-alpha 1.